Consider the following 1105-residue polypeptide: SWI/SNF complex subunit SMARCC1 (1105 aa).

Alanine 2 carries the N-acetylalanine modification. Residues 28-302 (LAVYRRKDGG…PVSFRQRIST (275 aa)) are marR-like, BRCT and chromo domains module. Positions 38 to 164 (PATKFWESPE…IEKTLVQNNC (127 aa)) constitute a MarR-like domain. A BRCT; N-terminus domain is found at 168-211 (PNIYLIPDIDLKLANKLKDIIKRHQGTFTDEKSKASHHIYPYSS). Lysine 179 is covalently cross-linked (Glycyl lysine isopeptide (Lys-Gly) (interchain with G-Cter in SUMO2)). In terms of domain architecture, Chromo spans 217–245 (EWLRPVMRKEKQVLVHWGFYPDSYDTWVH). The BRCT; C-terminus domain maps to 261–285 (KPWKVHVKWILDTDIFNEWMNEEDY). The disordered stretch occupies residues 296 to 439 (FRQRISTKNE…DQSRSVDLGE (144 aa)). Positions 302–318 (TKNEEPVRSPERRDRKA) are enriched in basic and acidic residues. Phosphoserine is present on residues serine 310, serine 328, and serine 330. The residue at position 335 (threonine 335) is a Phosphothreonine. Residues lysine 345 and lysine 346 each carry the N6-acetyllysine modification. The residue at position 350 (serine 350) is a Phosphoserine. Position 354 is an N6-acetyllysine (lysine 354). At serine 357 the chain carries Phosphoserine. Lysine 359 is modified (N6-acetyllysine; alternate). Lysine 359 is covalently cross-linked (Glycyl lysine isopeptide (Lys-Gly) (interchain with G-Cter in SUMO2); alternate). Threonine 398 carries the phosphothreonine modification. The 98-residue stretch at 449–546 (IIIPSYASWF…YQVDPESRPM (98 aa)) folds into the SWIRM domain. Serine 573 is subject to Phosphoserine. A Glycyl lysine isopeptide (Lys-Gly) (interchain with G-Cter in SUMO2) cross-link involves residue lysine 592. The SANT domain occupies 618–669 (SAGREWTEQETLLLLEALEMYKDDWNKVSEHVGSRTQDECILHFLRLPIEDP). Residue lysine 739 forms a Glycyl lysine isopeptide (Lys-Gly) (interchain with G-Cter in SUMO2) linkage. Residues 745-860 (ARASGKVDPT…DTGKKKVEHE (116 aa)) are disordered. Over residues 776–785 (AEEEKMEADP) the composition is skewed to acidic residues. The span at 789-860 (QPEKAENKVE…DTGKKKVEHE (72 aa)) shows a compositional bias: basic and acidic residues. A Glycyl lysine isopeptide (Lys-Gly) (interchain with G-Cter in SUMO2) cross-link involves residue lysine 796. A phosphoserine mark is found at serine 822 and serine 825. Glycyl lysine isopeptide (Lys-Gly) (interchain with G-Cter in SUMO2) cross-links involve residues lysine 829 and lysine 856. A coiled-coil region spans residues 914 to 946 (FEELETIMDREKEALEQQRQQLLTERQNFHMEQ). At lysine 948 the chain carries N6-acetyllysine. Disordered stretches follow at residues 956 to 1028 (QQME…PGQH) and 1041 to 1105 (IHPS…SAAP). Low complexity predominate over residues 957–993 (QMEQQQHGQNPQQAHQHSGGPGLAPLGAAGHPGMMPH). Pro residues-rich tracts occupy residues 994-1017 (QQPP…PGQI) and 1048-1057 (PTPPGMPPMP). Arginine 1064 carries the post-translational modification Asymmetric dimethylarginine. The span at 1073–1105 (MYPPPPQQQPPPPPPADGVPPPPAPGPPASAAP) shows a compositional bias: pro residues.

Belongs to the SMARCC family. In terms of assembly, component of the multiprotein chromatin-remodeling complexes SWI/SNF: SWI/SNF-A (BAF), SWI/SNF-B (PBAF) and related complexes. The canonical complex contains a catalytic subunit (either SMARCA4/BRG1/BAF190A or SMARCA2/BRM/BAF190B) and at least SMARCE1, ACTL6A/BAF53, SMARCC1/BAF155, SMARCC2/BAF170, and SMARCB1/SNF5/BAF47. Other subunits specific to each of the complexes may also be present permitting several possible combinations developmentally and tissue specific. Component of the BAF complex, which includes at least actin (ACTB), ARID1A/BAF250A, ARID1B/BAF250B, SMARCA2/BRM, SMARCA4/BRG1, ACTL6A/BAF53, ACTL6B/BAF53B, SMARCE1/BAF57, SMARCC1/BAF155, SMARCC2/BAF170, SMARCB1/SNF5/INI1, and one or more SMARCD1/BAF60A, SMARCD2/BAF60B, or SMARCD3/BAF60C. In muscle cells, the BAF complex also contains DPF3. Component of neural progenitors-specific chromatin remodeling complex (npBAF complex) composed of at least, ARID1A/BAF250A or ARID1B/BAF250B, SMARCD1/BAF60A, SMARCD3/BAF60C, SMARCA2/BRM/BAF190B, SMARCA4/BRG1/BAF190A, SMARCB1/BAF47, SMARCC1/BAF155, SMARCE1/BAF57, SMARCC2/BAF170, PHF10/BAF45A, ACTL6A/BAF53A and actin. Component of neuron-specific chromatin remodeling complex (nBAF complex) composed of at least, ARID1A/BAF250A or ARID1B/BAF250B, SMARCD1/BAF60A, SMARCD3/BAF60C, SMARCA2/BRM/BAF190B, SMARCA4/BRG1/BAF190A, SMARCB1/BAF47, SMARCC1/BAF155, SMARCE1/BAF57, SMARCC2/BAF170, DPF1/BAF45B, DPF3/BAF45C, ACTL6B/BAF53B and actin. Component of the SWI/SNF-B (PBAF) chromatin remodeling complex, at least composed of SMARCA4/BRG1, SMARCB1/BAF47/SNF5, ACTL6A/BAF53A or ACTL6B/BAF53B, SMARCE1/BAF57, SMARCD1/BAF60A, SMARCD2/BAF60B, perhaps SMARCD3/BAF60C, SMARCC1/BAF155, SMARCC2/BAF170, PBRM1/BAF180, ARID2/BAF200 and actin. Component of SWI/SNF (GBAF) subcomplex, which includes at least BICRA or BICRAL (mutually exclusive), BRD9, SS18, SMARCA2/BRM, SMARCA4/BRG1/BAF190A, ACTL6A/BAF53, SMARCC1/BAF155, and SMARCD1/BAF60A. May also interact with the SIN3A histone deacetylase transcription repressor complex in conjunction with SMARCA2 and SMARCA4. The minimal complex composed of SMARCC1 and SMARCA4 seems to be able to associate with cyclin such as CCNE1 or transcription factors such as KLF1 or GATA1. Interacts with NR3C1 and SMARD1. Interacts with TRIP12; leading to disrupt interaction between TRIP12 and SMARCE1 and prevent SMARCE1 ubiquitination. Interacts with CEBPB (when not methylated). Interacts with KDM6B. Interacts with MKKS; the interaction takes place predominantly in the cytoplasm and may modulate SMARCC1 location. Interacts with DPF2. Interacts with PRDM1/BLIMP1. Interacts with DPF3a (isoform 2 of DPF3/BAF45C) and with HDGFL2 in a DPF3a-dependent manner. Phosphorylated on undefined residues at the G2/M transition by ERK1 and other kinases. This may contribute to cell cycle specific inactivation of remodeling complexes containing the phosphorylated protein. As to expression, expressed in brain, heart, muscle, placenta, lung, liver, muscle, kidney and pancreas.

The protein localises to the nucleus. Its subcellular location is the cytoplasm. Its function is as follows. Involved in transcriptional activation and repression of select genes by chromatin remodeling (alteration of DNA-nucleosome topology). Component of SWI/SNF chromatin remodeling complexes that carry out key enzymatic activities, changing chromatin structure by altering DNA-histone contacts within a nucleosome in an ATP-dependent manner. May stimulate the ATPase activity of the catalytic subunit of the complex. Belongs to the neural progenitors-specific chromatin remodeling complex (npBAF complex) and the neuron-specific chromatin remodeling complex (nBAF complex). During neural development a switch from a stem/progenitor to a postmitotic chromatin remodeling mechanism occurs as neurons exit the cell cycle and become committed to their adult state. The transition from proliferating neural stem/progenitor cells to postmitotic neurons requires a switch in subunit composition of the npBAF and nBAF complexes. As neural progenitors exit mitosis and differentiate into neurons, npBAF complexes which contain ACTL6A/BAF53A and PHF10/BAF45A, are exchanged for homologous alternative ACTL6B/BAF53B and DPF1/BAF45B or DPF3/BAF45C subunits in neuron-specific complexes (nBAF). The npBAF complex is essential for the self-renewal/proliferative capacity of the multipotent neural stem cells. The nBAF complex along with CREST plays a role regulating the activity of genes essential for dendrite growth. This chain is SWI/SNF complex subunit SMARCC1, found in Homo sapiens (Human).